The sequence spans 448 residues: MASSSCLKQGSVPMNNVCVTPEATYEAVVADPRLFMTSLERLHSLLGTKFMVPIIGGRDLDLHKLFVEVTSRGGINKILNERRWKEVTATFVFPPTATNASYVLRKYYFSLLNNYEQIYFFRSNGQIPPDSMQSPSARPCFIQGAIRPSQELQALTFTPQPKINTAEFLGGSLAGSNVVGVIDGKFESGYLVTVTIGSEQLKGVLYQLLPQNTVSYQTPQQSHGVLPNTLNISANPQGVAGGVTKRRRRRKKSEIKRRDPDHPKPNRSGYNFFFAEQHARLKPLHPGKDRDISRMIGELWNKLNEDEKLIYQGKAMEDKERYRTEMEDYREKKKNGQLISNAVPLQQRLPEQNVDMAEADLPIDEVEEDDEEGDSSGSSGESEPHDDQSIETDPELEEPSLNPSGPNLNPNPTEIVVAPKEKNGDVVMETSPLKKADEPTVAVTAEQN.

The 92-residue stretch at 29–120 (VADPRLFMTS…LLNNYEQIYF (92 aa)) folds into the ARID domain. The segment covering 219 to 236 (PQQSHGVLPNTLNISANP) has biased composition (polar residues). Disordered stretches follow at residues 219 to 270 (PQQS…RSGY), 333 to 352 (KKNG…LPEQ), and 366 to 448 (VEED…AEQN). Basic residues predominate over residues 244–255 (TKRRRRRKKSEI). The HMG box DNA-binding region spans 263–330 (PKPNRSGYNF…RYRTEMEDYR (68 aa)). Over residues 389–398 (SIETDPELEE) the composition is skewed to acidic residues. Positions 399-412 (PSLNPSGPNLNPNP) are enriched in low complexity.

It belongs to the HMGB family.

The protein localises to the nucleus. In terms of biological role, binds preferentially DNA with A/T-rich content. This chain is High mobility group B protein 15 (HMGB15), found in Arabidopsis thaliana (Mouse-ear cress).